The chain runs to 945 residues: Nonsense-mediated mRNA decay factor SMG8 (945 aa).

2 disordered regions span residues 563 to 604 (RAEP…SANE) and 633 to 671 (AEAEVEEAEVCDKGSQDNSTSSDTSTESEIELQPKERSA).

It belongs to the SMG8 family.

Involved in nonsense-mediated decay (NMD) of mRNAs containing premature stop codons. Probable component of kinase complex containing nonC and recruited to stalled ribosomes. The polypeptide is Nonsense-mediated mRNA decay factor SMG8 (Drosophila grimshawi (Hawaiian fruit fly)).